Reading from the N-terminus, the 259-residue chain is Probable kinetochore protein spc25 (259 aa).

A compositionally biased stretch (polar residues) spans 1 to 20; the sequence is MSRKSVMSSTFEPSLSTSRQ. Residues 1 to 25 are disordered; sequence MSRKSVMSSTFEPSLSTSRQPLGPS. Residues 59–162 adopt a coiled-coil conformation; it reads RKRVLEERNQ…HAAQLEAQAR (104 aa).

It belongs to the SPC25 family. As to quaternary structure, component of the NDC80 complex, which consists of kpr-1/ndc80, kpr-2/nuf2, kpr-3/spc24 and kpr-4/spc25.

Its subcellular location is the nucleus. The protein resides in the chromosome. It localises to the centromere. The protein localises to the kinetochore. Its function is as follows. Acts as a component of the essential kinetochore-associated NDC80 complex, which is required for chromosome segregation and spindle checkpoint activity. The sequence is that of Probable kinetochore protein spc25 (kpr-4) from Neurospora crassa (strain ATCC 24698 / 74-OR23-1A / CBS 708.71 / DSM 1257 / FGSC 987).